The chain runs to 447 residues: Trigger factor (447 aa).

In terms of domain architecture, PPIase FKBP-type spans 174–261; sequence GDIAVLGFKG…LKDLKTRELP (88 aa).

It belongs to the FKBP-type PPIase family. Tig subfamily.

The protein localises to the cytoplasm. The enzyme catalyses [protein]-peptidylproline (omega=180) = [protein]-peptidylproline (omega=0). Its function is as follows. Involved in protein export. Acts as a chaperone by maintaining the newly synthesized protein in an open conformation. Functions as a peptidyl-prolyl cis-trans isomerase. The protein is Trigger factor of Synechococcus sp. (strain CC9902).